A 412-amino-acid chain; its full sequence is MERIPSAQPPPACLPKAPGLEHGDLPGMYPAHMYQVYKSRRGIKRSEDSKETYKLPHRLIEKKRRDRINECIAQLKDLLPEHLKLTTLGHLEKAVVLELTLKHVKALTNLIDQQQQKIIALQSGLQAGELSGRNVETGQEMFCSGFQTCAREVLQYLAKHENTRDLKSSQLVTHLHRVVSELLQGGTSRKSSDPAPKVMDFKEKPSSPAKGSEGPGKNCVPVIQRTFAHSSGEQSGSDTDTDSGYGGESEKGDLRSEQLCFKSDHGRRFTMGERIGAIKQESEEPPTKKNRMQLSDDEGHFTSSDLISSPFLGPHPHQPPFCLPFYLIPPSATAYLPMLEKCWYPTSVPVLYPGLNASAAALSSFMNPDKISAPLLMPQRLPSPLPAHPSVDSSVLLQALKPIPPLNLETKD.

Positions 1–139 (MERIPSAQPP…LSGRNVETGQ (139 aa)) are essential for interaction with BMAL1, E-box binding and repressor activity against the CLOCK-BMAL1 heterodimer. A bHLH domain is found at 52 to 107 (TYKLPHRLIEKKRRDRINECIAQLKDLLPEHLKLTTLGHLEKAVVLELTLKHVKAL). The necessary for interaction with RXRA and repressor activity against RXRA stretch occupies residues 75 to 79 (LKDLL). Positions 142-175 (FCSGFQTCAREVLQYLAKHENTRDLKSSQLVTHL) constitute an Orange domain. Lys-159 is covalently cross-linked (Glycyl lysine isopeptide (Lys-Gly) (interchain with G-Cter in SUMO1, SUMO2 and SUMO3)). Residue Lys-167 forms a Glycyl lysine isopeptide (Lys-Gly) (interchain with G-Cter in SUMO2) linkage. Disordered stretches follow at residues 183–259 (LQGG…SEQL) and 275–309 (IGAI…LISS). A Phosphoserine modification is found at Ser-235. The segment covering 248-259 (ESEKGDLRSEQL) has biased composition (basic and acidic residues). Residue Lys-279 forms a Glycyl lysine isopeptide (Lys-Gly) (interchain with G-Cter in SUMO1); alternate linkage. Lys-279 is covalently cross-linked (Glycyl lysine isopeptide (Lys-Gly) (interchain with G-Cter in SUMO1, SUMO2 and SUMO3); alternate). Residue Lys-279 forms a Glycyl lysine isopeptide (Lys-Gly) (interchain with G-Cter in SUMO2); alternate linkage. Lys-288 is covalently cross-linked (Glycyl lysine isopeptide (Lys-Gly) (interchain with G-Cter in SUMO2)). The residue at position 383 (Ser-383) is a Phosphoserine.

As to quaternary structure, homodimer. Heterodimer with BHLHE41/DEC2. Interacts with TCF3/E47. Interacts with ubiquitin-conjugating enzyme UBE2I/UBC9. Interacts with HDAC1, SUMO1, RXRA and BMAL1. Post-translationally, ubiquitinated; which may lead to proteasomal degradation. Sumoylation inhibits its ubiquitination and promotes its negative regulation of the CLOCK-BMAL1 heterodimer transcriptional activator activity.

The protein resides in the cytoplasm. Its subcellular location is the nucleus. Transcriptional repressor involved in the regulation of the circadian rhythm by negatively regulating the activity of the clock genes and clock-controlled genes. Acts as the negative limb of a novel autoregulatory feedback loop (DEC loop) which differs from the one formed by the PER and CRY transcriptional repressors (PER/CRY loop). Both these loops are interlocked as it represses the expression of PER1/2 and in turn is repressed by PER1/2 and CRY1/2. Represses the activity of the circadian transcriptional activator: CLOCK-BMAL1|BMAL2 heterodimer by competing for the binding to E-box elements (5'-CACGTG-3') found within the promoters of its target genes. Negatively regulates its own expression and the expression of DBP and BHLHE41/DEC2. Acts as a corepressor of RXR and the RXR-LXR heterodimers and represses the ligand-induced RXRA and NR1H3/LXRA transactivation activity. May be involved in the regulation of chondrocyte differentiation via the cAMP pathway. Represses the transcription of NR0B2 and attentuates the transactivation of NR0B2 by the CLOCK-BMAL1 complex. Drives the circadian rhythm of blood pressure through transcriptional repression of ATP1B1 in the cardiovascular system. This chain is Class E basic helix-loop-helix protein 40 (BHLHE40), found in Pongo abelii (Sumatran orangutan).